The following is a 135-amino-acid chain: Ribonuclease P protein component (135 aa).

This sequence belongs to the RnpA family. In terms of assembly, consists of a catalytic RNA component (M1 or rnpB) and a protein subunit.

It carries out the reaction Endonucleolytic cleavage of RNA, removing 5'-extranucleotides from tRNA precursor.. Functionally, RNaseP catalyzes the removal of the 5'-leader sequence from pre-tRNA to produce the mature 5'-terminus. It can also cleave other RNA substrates such as 4.5S RNA. The protein component plays an auxiliary but essential role in vivo by binding to the 5'-leader sequence and broadening the substrate specificity of the ribozyme. This chain is Ribonuclease P protein component, found in Pseudomonas aeruginosa (strain LESB58).